The primary structure comprises 84 residues: Cell division topological specificity factor (84 aa).

It belongs to the MinE family.

Functionally, prevents the cell division inhibition by proteins MinC and MinD at internal division sites while permitting inhibition at polar sites. This ensures cell division at the proper site by restricting the formation of a division septum at the midpoint of the long axis of the cell. The protein is Cell division topological specificity factor of Ralstonia pickettii (strain 12J).